The following is a 127-amino-acid chain: Ribosome-binding factor A (127 aa).

The protein belongs to the RbfA family. Monomer. Binds 30S ribosomal subunits, but not 50S ribosomal subunits or 70S ribosomes.

It localises to the cytoplasm. One of several proteins that assist in the late maturation steps of the functional core of the 30S ribosomal subunit. Associates with free 30S ribosomal subunits (but not with 30S subunits that are part of 70S ribosomes or polysomes). Required for efficient processing of 16S rRNA. May interact with the 5'-terminal helix region of 16S rRNA. The chain is Ribosome-binding factor A from Actinobacillus pleuropneumoniae serotype 7 (strain AP76).